Consider the following 445-residue polypeptide: Tubulin beta chain (445 aa).

Gln11, Glu69, Ser138, Gly142, Thr143, Gly144, Asn204, and Asn226 together coordinate GTP. Position 69 (Glu69) interacts with Mg(2+). A disordered region spans residues 426 to 445 (QDATAEEEGEFEEEEGDVEA). Acidic residues predominate over residues 429 to 445 (TAEEEGEFEEEEGDVEA).

The protein belongs to the tubulin family. Dimer of alpha and beta chains. A typical microtubule is a hollow water-filled tube with an outer diameter of 25 nm and an inner diameter of 15 nM. Alpha-beta heterodimers associate head-to-tail to form protofilaments running lengthwise along the microtubule wall with the beta-tubulin subunit facing the microtubule plus end conferring a structural polarity. Microtubules usually have 13 protofilaments but different protofilament numbers can be found in some organisms and specialized cells. Interacts with DCX/apicortin; the interaction stabilizes microtubule assembly. Mg(2+) serves as cofactor.

It is found in the cytoplasm. The protein resides in the cytoskeleton. Its function is as follows. Tubulin is the major constituent of microtubules, a cylinder consisting of laterally associated linear protofilaments composed of alpha- and beta-tubulin heterodimers. Microtubules grow by the addition of GTP-tubulin dimers to the microtubule end, where a stabilizing cap forms. Below the cap, tubulin dimers are in GDP-bound state, owing to GTPase activity of alpha-tubulin. This is Tubulin beta chain from Plasmodium falciparum.